Consider the following 675-residue polypeptide: DNA ligase (675 aa).

Residues 33 to 37, 82 to 83, and glutamate 115 each bind NAD(+); these read DAEYD and SL. The active-site N6-AMP-lysine intermediate is lysine 117. NAD(+) contacts are provided by arginine 138, glutamate 175, lysine 293, and lysine 317. Zn(2+) is bound by residues cysteine 411, cysteine 414, cysteine 429, and cysteine 435. The BRCT domain occupies 594 to 675; that stretch reads IADNPLKDKT…LIGYFTTIVS (82 aa).

This sequence belongs to the NAD-dependent DNA ligase family. LigA subfamily. Mg(2+) serves as cofactor. Mn(2+) is required as a cofactor.

It carries out the reaction NAD(+) + (deoxyribonucleotide)n-3'-hydroxyl + 5'-phospho-(deoxyribonucleotide)m = (deoxyribonucleotide)n+m + AMP + beta-nicotinamide D-nucleotide.. Its function is as follows. DNA ligase that catalyzes the formation of phosphodiester linkages between 5'-phosphoryl and 3'-hydroxyl groups in double-stranded DNA using NAD as a coenzyme and as the energy source for the reaction. It is essential for DNA replication and repair of damaged DNA. The protein is DNA ligase of Glaesserella parasuis serovar 5 (strain SH0165) (Haemophilus parasuis).